The following is a 212-amino-acid chain: Placenta-specific protein 1 (212 aa).

The N-terminal stretch at 1 to 22 (MKVFKFIGLMILLTSAFSAGSG) is a signal peptide.

This sequence belongs to the PLAC1 family. Expressed in placenta. Localizes primarily to differentiated syncytiotrophoblast throughout gestation as well as to a small population of villous cytotrophoblasts. Also detected in maternal blood and rapidly disappears following delivery, but is not detected in other adult or fetal tissues examined.

Its subcellular location is the secreted. May play a role in placental development. The sequence is that of Placenta-specific protein 1 from Homo sapiens (Human).